The following is a 104-amino-acid chain: MDIDMNYPSITTLMSNESANLLIIWGNATPDISYLSYTTNPMLGDYVLNVSAINGCTEELIATHLVPTLENATQWVYDAGEYWDNYSFTDESTPLPGLSWPFNE.

This is an uncharacterized protein from Saccharomyces cerevisiae (strain ATCC 204508 / S288c) (Baker's yeast).